The following is a 362-amino-acid chain: Phosphoserine aminotransferase (362 aa).

Residues Ser-9 and Arg-42 each coordinate L-glutamate. Pyridoxal 5'-phosphate-binding positions include 76-77 (GR), Trp-102, Thr-153, Asp-174, and Gln-197. Lys-198 bears the N6-(pyridoxal phosphate)lysine mark. Residue 239–240 (NT) participates in pyridoxal 5'-phosphate binding.

This sequence belongs to the class-V pyridoxal-phosphate-dependent aminotransferase family. SerC subfamily. In terms of assembly, homodimer. Pyridoxal 5'-phosphate is required as a cofactor.

It is found in the cytoplasm. The enzyme catalyses O-phospho-L-serine + 2-oxoglutarate = 3-phosphooxypyruvate + L-glutamate. It catalyses the reaction 4-(phosphooxy)-L-threonine + 2-oxoglutarate = (R)-3-hydroxy-2-oxo-4-phosphooxybutanoate + L-glutamate. Its pathway is amino-acid biosynthesis; L-serine biosynthesis; L-serine from 3-phospho-D-glycerate: step 2/3. The protein operates within cofactor biosynthesis; pyridoxine 5'-phosphate biosynthesis; pyridoxine 5'-phosphate from D-erythrose 4-phosphate: step 3/5. Catalyzes the reversible conversion of 3-phosphohydroxypyruvate to phosphoserine and of 3-hydroxy-2-oxo-4-phosphonooxybutanoate to phosphohydroxythreonine. The protein is Phosphoserine aminotransferase of Salmonella arizonae (strain ATCC BAA-731 / CDC346-86 / RSK2980).